The chain runs to 258 residues: Small ribosomal subunit protein uS2 (258 aa).

Residues 226–258 are disordered; that stretch reads KQGQDDEETLEVDFKENADGSEEIVSAEENPED. Residues 244–258 show a composition bias toward acidic residues; the sequence is DGSEEIVSAEENPED.

The protein belongs to the universal ribosomal protein uS2 family.

This Lactobacillus acidophilus (strain ATCC 700396 / NCK56 / N2 / NCFM) protein is Small ribosomal subunit protein uS2.